A 153-amino-acid chain; its full sequence is UPF0311 protein RPA1785 (153 aa).

This sequence belongs to the UPF0311 family.

The sequence is that of UPF0311 protein RPA1785 from Rhodopseudomonas palustris (strain ATCC BAA-98 / CGA009).